A 277-amino-acid chain; its full sequence is Large ribosomal subunit protein uL2 (277 aa).

The tract at residues 220-277 (VRGSVMNPNDHPHGGGEGKAPIGRPSPMSPWGKKTLGKKTRSSKARSEKLIIRHRKSR) is disordered. Residues 254–263 (TLGKKTRSSK) are compositionally biased toward basic residues.

The protein belongs to the universal ribosomal protein uL2 family. As to quaternary structure, part of the 50S ribosomal subunit. Forms a bridge to the 30S subunit in the 70S ribosome.

In terms of biological role, one of the primary rRNA binding proteins. Required for association of the 30S and 50S subunits to form the 70S ribosome, for tRNA binding and peptide bond formation. It has been suggested to have peptidyltransferase activity; this is somewhat controversial. Makes several contacts with the 16S rRNA in the 70S ribosome. This Latilactobacillus sakei subsp. sakei (strain 23K) (Lactobacillus sakei subsp. sakei) protein is Large ribosomal subunit protein uL2.